Reading from the N-terminus, the 300-residue chain is Large ribosomal subunit protein uL18 (300 aa).

The segment covering asparagine 246–arginine 267 has biased composition (basic and acidic residues). Residues asparagine 246–alanine 276 form a disordered region.

Belongs to the universal ribosomal protein uL18 family. Component of the large ribosomal subunit (LSU).

It is found in the cytoplasm. Its subcellular location is the nucleus. In terms of biological role, component of the ribosome, a large ribonucleoprotein complex responsible for the synthesis of proteins in the cell. The small ribosomal subunit (SSU) binds messenger RNAs (mRNAs) and translates the encoded message by selecting cognate aminoacyl-transfer RNA (tRNA) molecules. The large subunit (LSU) contains the ribosomal catalytic site termed the peptidyl transferase center (PTC), which catalyzes the formation of peptide bonds, thereby polymerizing the amino acids delivered by tRNAs into a polypeptide chain. The nascent polypeptides leave the ribosome through a tunnel in the LSU and interact with protein factors that function in enzymatic processing, targeting, and the membrane insertion of nascent chains at the exit of the ribosomal tunnel. In Toxoptera citricida (Brown citrus aphid), this protein is Large ribosomal subunit protein uL18 (RpL5).